A 141-amino-acid chain; its full sequence is Hemoglobin subunit alpha-D (141 aa).

The Globin domain maps to 1 to 141 (MLTAEDKKLI…VAAVLAEKYR (141 aa)). Heme b-binding residues include H58 and H87.

In terms of assembly, heterotetramer of two alpha-D chains and two beta chains. As to expression, red blood cells.

Involved in oxygen transport from the lung to the various peripheral tissues. The polypeptide is Hemoglobin subunit alpha-D (HBAD) (Aythya fuligula (Tufted duck)).